A 361-amino-acid polypeptide reads, in one-letter code: Tyrosine--tRNA ligase (361 aa).

L-tyrosine is bound by residues Tyr-36, Tyr-162, Gln-166, Asp-169, and Gln-184. Residues Lys-235–Ser-239 carry the 'KMSKS' region motif. Lys-238 is an ATP binding site.

It belongs to the class-I aminoacyl-tRNA synthetase family. TyrS type 4 subfamily. As to quaternary structure, homodimer.

It is found in the cytoplasm. The enzyme catalyses tRNA(Tyr) + L-tyrosine + ATP = L-tyrosyl-tRNA(Tyr) + AMP + diphosphate + H(+). Functionally, catalyzes the attachment of tyrosine to tRNA(Tyr) in a two-step reaction: tyrosine is first activated by ATP to form Tyr-AMP and then transferred to the acceptor end of tRNA(Tyr). This Sulfolobus acidocaldarius (strain ATCC 33909 / DSM 639 / JCM 8929 / NBRC 15157 / NCIMB 11770) protein is Tyrosine--tRNA ligase.